A 441-amino-acid polypeptide reads, in one-letter code: Ankyrin repeat and MYND domain-containing protein 2 (441 aa).

ANK repeat units follow at residues 45–74, 79–108, and 159–188; these read NGMTPLMHAAYKGKLDMCKLLLRHGADVNC, HGYTALMFAALSGNKDITWVMLEAGAETDV, and KLAGPLHKIITTTNLHPVKIVMLVNENPLL. Zn(2+) is bound by residues C320, C323, C332, C335, C341, C345, H353, and C357. The segment at 320-357 adopts an MYND-type zinc-finger fold; the sequence is CTTCGEKGASKRCSVCKMVIYCDQTCQKTHWFTHKKIC. The span at 374-384 shows a compositional bias: basic and acidic residues; that stretch reads EKRQEENHGKL. The interval 374–441 is disordered; sequence EKRQEENHGK…APAGPQVSEE (68 aa).

Interacts with the retinal-specific guanylyl cyclase GC1.

The protein localises to the cell projection. It localises to the cilium. May be involved in the trafficking of signaling proteins to the cilia. The protein is Ankyrin repeat and MYND domain-containing protein 2 (ANKMY2) of Homo sapiens (Human).